The primary structure comprises 797 residues: Leucine-rich repeat-containing protein AAC1 (797 aa).

The span at 1–12 (MKRTSNRNEEAT) shows a compositional bias: basic and acidic residues. Disordered stretches follow at residues 1–20 (MKRT…SSTT), 51–103 (YSLF…TTTT), 125–148 (NLPT…TTTT), and 307–333 (HSTS…TITA). Polar residues predominate over residues 55-81 (NEPNNDNDTNSSTRPNKQQKLLKSNES). Residues 82 to 103 (TTSTTTTTTPITTTTTTTTTTT) are compositionally biased toward low complexity. Positions 313 to 326 (SSPPPPPPPPPPQI) are enriched in pro residues. 10 LRR repeats span residues 376 to 397 (KLKK…DFFS), 406 to 425 (TLET…QLLS), 435 to 456 (VLKR…YLNK), 464 to 484 (QLET…IMMK), 492 to 513 (SLKE…DFGK), 514 to 535 (SITS…KGLS), 543 to 564 (SITS…KSLS), 572 to 593 (TLKF…DHLV), 601 to 622 (SIHS…TLSQ), and 633 to 653 (PFKY…KKLI).

In Dictyostelium discoideum (Social amoeba), this protein is Leucine-rich repeat-containing protein AAC1 (AAC1).